Consider the following 216-residue polypeptide: GTP cyclohydrolase 1 (216 aa).

A disordered region spans residues 1-33; that stretch reads MPQARGEGATPPTSLPNPSLKGVPLPDNPNNLE. Residues 24–33 are compositionally biased toward low complexity; sequence PLPDNPNNLE. Positions 102, 105, and 173 each coordinate Zn(2+).

This sequence belongs to the GTP cyclohydrolase I family. Toroid-shaped homodecamer, composed of two pentamers of five dimers.

The enzyme catalyses GTP + H2O = 7,8-dihydroneopterin 3'-triphosphate + formate + H(+). Its pathway is cofactor biosynthesis; 7,8-dihydroneopterin triphosphate biosynthesis; 7,8-dihydroneopterin triphosphate from GTP: step 1/1. This Deinococcus radiodurans (strain ATCC 13939 / DSM 20539 / JCM 16871 / CCUG 27074 / LMG 4051 / NBRC 15346 / NCIMB 9279 / VKM B-1422 / R1) protein is GTP cyclohydrolase 1 (folE).